Reading from the N-terminus, the 511-residue chain is MFS-type transporper mpsC (511 aa).

Basic and acidic residues predominate over residues 1-35 (MTSSTESKHSNDESTDLEKQDAEESHGLPEERKQD). A disordered region spans residues 1 to 65 (MTSSTESKHS…PDDPANPMNW (65 aa)). Helical transmembrane passes span 74 to 94 (VVMA…FAPA), 108 to 128 (ITAA…PLVI), 147 to 167 (ITVA…FLVF), 169 to 189 (LITG…IADV), 201 to 221 (AFAM…GFIA), 228 to 248 (WVFR…YFVM), and 303 to 323 (PITL…ILLF). Asparagine 337 carries an N-linked (GlcNAc...) asparagine glycan. Helical transmembrane passes span 342–362 (GLSY…FGML), 383–403 (LLLM…YGWT), 411–431 (ILPM…MMPI), 443–465 (VAAS…LPLA), and 476–496 (GWGN…PILF).

This sequence belongs to the major facilitator superfamily.

It localises to the membrane. In terms of biological role, MFS-type transporper; part of the gene cluster that mediates the biosynthesis of macrophasetins, 3-decalinoyltetramic acids (DTAs) which feature a tetramate (pyrrolidine-2,4-dione) unit connected to a decalin fragment and that have potent bioactivities. Efflux pump that might be required for efficient secretion of macrophasetins. This is MFS-type transporper mpsC from Macrophomina phaseolina (strain MS6) (Charcoal rot fungus).